A 150-amino-acid chain; its full sequence is Transcription antitermination protein NusB (150 aa).

The protein belongs to the NusB family.

Functionally, involved in transcription antitermination. Required for transcription of ribosomal RNA (rRNA) genes. Binds specifically to the boxA antiterminator sequence of the ribosomal RNA (rrn) operons. The polypeptide is Transcription antitermination protein NusB (Alcanivorax borkumensis (strain ATCC 700651 / DSM 11573 / NCIMB 13689 / SK2)).